The chain runs to 108 residues: UPF0060 membrane protein Mvan_3406 (108 aa).

4 helical membrane passes run 7 to 27 (LLFVLAAILEIGGAWLVWQGV), 32 to 52 (GLTWVGAGVIALGAYGFVAAF), 61 to 81 (VLAAYGGVFVAGSLLWGVVAD), and 87 to 107 (RWDITGAAVCLAGVGLIMYAP).

It belongs to the UPF0060 family.

It is found in the cell membrane. The polypeptide is UPF0060 membrane protein Mvan_3406 (Mycolicibacterium vanbaalenii (strain DSM 7251 / JCM 13017 / BCRC 16820 / KCTC 9966 / NRRL B-24157 / PYR-1) (Mycobacterium vanbaalenii)).